The chain runs to 152 residues: Large ribosomal subunit protein bL9 (152 aa).

This sequence belongs to the bacterial ribosomal protein bL9 family.

Its function is as follows. Binds to the 23S rRNA. This is Large ribosomal subunit protein bL9 from Gloeothece citriformis (strain PCC 7424) (Cyanothece sp. (strain PCC 7424)).